A 94-amino-acid polypeptide reads, in one-letter code: MLQPIGDRVIVKVKDEEEKTVGGIVLASNAKKKPTEGEVVAVGEGAYASNGEKIPMSVKKGDVVLYDRYSGTNVEYEGEKYLVLHEKDILAIAK.

It belongs to the GroES chaperonin family. In terms of assembly, heptamer of 7 subunits arranged in a ring. Interacts with the chaperonin GroEL.

It localises to the cytoplasm. Functionally, together with the chaperonin GroEL, plays an essential role in assisting protein folding. The GroEL-GroES system forms a nano-cage that allows encapsulation of the non-native substrate proteins and provides a physical environment optimized to promote and accelerate protein folding. GroES binds to the apical surface of the GroEL ring, thereby capping the opening of the GroEL channel. The protein is Co-chaperonin GroES of Lactobacillus helveticus (strain DPC 4571).